The primary structure comprises 96 residues: Probable Fe(2+)-trafficking protein (96 aa).

Positions 21–40 are disordered; the sequence is LPKMPHPPFPNKKGQELQET.

It belongs to the Fe(2+)-trafficking protein family.

Functionally, could be a mediator in iron transactions between iron acquisition and iron-requiring processes, such as synthesis and/or repair of Fe-S clusters in biosynthetic enzymes. The polypeptide is Probable Fe(2+)-trafficking protein (Psychrobacter arcticus (strain DSM 17307 / VKM B-2377 / 273-4)).